The following is a 424-amino-acid chain: Sulfatase ppz1 (424 aa).

Ca(2+) is bound by residues Asp13, Asp203, and Asn204.

This sequence belongs to the sulfatase family. Ca(2+) serves as cofactor.

In terms of biological role, sulfatase; part of the gene cluster that mediates the biosynthesis of pyrrolopyrazines, secondary metabolites showing insecticidal activity. The role of ppz1 within the pathway has still to be determined. The single multifunctional NRPS ppzA is sufficient to produce peramine via condensation of 1-pyrroline-5-carboxylate and arginine, N-methylation of the alpha-amino group of arginine and reduction of the thioester and the cyclization to form an iminium ion resulting in release from the peptide synthetase. Deprotonation of this intermediate and oxidation of the pyrroline ring would give rise to peramine. In Epichloe species that produce only peramine, the peramine synthetase gene is not localized in a gene cluster, in contrast to Metarhizium species that contain additional pyrrolopyrazine biosynthesis genes. The 2-oxoglutarate-Fe(II) type oxidoreductase ppzC hydroxylates peramine to yield the newly identified compound 8-hydroxyperamine whereas ppzD converts L-proline into trans-4-hydroxy-L-proline, a precursor of peramine biosynthesis. The sequence is that of Sulfatase ppz1 from Metarhizium majus (strain ARSEF 297).